Reading from the N-terminus, the 543-residue chain is Protein SGE1 (543 aa).

Over 1–8 the chain is Cytoplasmic; the sequence is MKSTLSLT. Residues 9 to 29 traverse the membrane as a helical segment; the sequence is LCVISLLLTLFLAALDIVIVV. Residues 30 to 41 lie on the Extracellular side of the membrane; that stretch reads TLYDTIGIKFHD. The helical transmembrane segment at 42 to 62 threads the bilayer; it reads FGNIGWLVTGYALSNAVFMLL. Residues 63–79 are Cytoplasmic-facing; that stretch reads WGRLAEILGTKECLMIS. Residues 80-100 traverse the membrane as a helical segment; it reads VIVFEIGSLISALSNSMATLI. Residues 101-103 lie on the Extracellular side of the membrane; sequence SGR. The helical transmembrane segment at 104-124 threads the bilayer; it reads VVAGFGGSGIESLAFVVGTSI. Over 125-131 the chain is Cytoplasmic; that stretch reads VRENHRG. A helical transmembrane segment spans residues 132–152; that stretch reads IMITALAISYVIAEGVGPFIG. Residues 153 to 162 lie on the Extracellular side of the membrane; the sequence is GAFNEHLSWR. The chain crosses the membrane as a helical span at residues 163 to 183; the sequence is WCFYINLPIGAFAFIILAFCN. Residues 184-227 lie on the Cytoplasmic side of the membrane; that stretch reads TSGEPHQKMWLPSKIKKIMNYDYGELLKASFWKNTFEVLVFKLD. The chain crosses the membrane as a helical span at residues 228-248; sequence MVGIILSSAGFTLLMLGLSFG. The Extracellular segment spans residues 249-255; the sequence is GNNFPWN. A helical transmembrane segment spans residues 256–276; the sequence is SGIIICFFTVGPILLLLFCAY. Topologically, residues 277-300 are cytoplasmic; that stretch reads DFHFLSLSGLHYDNKRIKPLLTWN. The chain crosses the membrane as a helical span at residues 301–321; that stretch reads IASNCGIFTSSITGFLSCFAY. The Extracellular segment spans residues 322 to 341; sequence ELQSAYLVQLYQLVFKKKPT. A helical transmembrane segment spans residues 342 to 362; it reads LASIHLWELSIPAMIATMAIA. Over 363–373 the chain is Cytoplasmic; that stretch reads YLNSKYGIIKP. A helical transmembrane segment spans residues 374–394; it reads AIVFGVLCGIVGSGLFTLING. The Extracellular segment spans residues 395 to 399; that stretch reads ELSQS. The helical transmembrane segment at 400–420 threads the bilayer; sequence IGYSILPGIAFGSIFQATLLS. At 421–443 the chain is on the cytoplasmic side; that stretch reads SQVQITSDDPDFQNKFIEVTAFN. Residues 444 to 464 traverse the membrane as a helical segment; it reads SFAKSLGFAFGGNMGAMIFTA. Over 465–508 the chain is Extracellular; that stretch reads SLKNQMRSSQLNIPQFTSVETLLAYSTEHYDGPQSSLSKFINTA. Residues 509 to 529 traverse the membrane as a helical segment; sequence IHDVFYCALGCYALSFFFGIF. Residues 530–543 lie on the Cytoplasmic side of the membrane; it reads TSSKKTTISAKKQQ.

It belongs to the major facilitator superfamily.

The protein localises to the membrane. In terms of biological role, drug export permease. Multi-copy suppressor of loss-of-function mutation of GAL11. Involved specifically in transcription of GAL4-dependent genes. Can link GAL4 with the basal transcription machinery if GAL11 is missing. Confers resistance to 10-N-nonyl acridine orange (NAO) and in general to cationic dyes. The polypeptide is Protein SGE1 (SGE1) (Saccharomyces cerevisiae (strain ATCC 204508 / S288c) (Baker's yeast)).